We begin with the raw amino-acid sequence, 338 residues long: Glyceraldehyde-3-phosphate dehydrogenase (338 aa).

Residues 13-14 (RI), aspartate 35, and arginine 80 each bind NAD(+). Residues 151–153 (SCT), threonine 182, 211–212 (TG), and arginine 234 each bind D-glyceraldehyde 3-phosphate. Residue cysteine 152 is the Nucleophile of the active site. Position 316 (asparagine 316) interacts with NAD(+).

The protein belongs to the glyceraldehyde-3-phosphate dehydrogenase family. As to quaternary structure, homotetramer.

The protein localises to the cytoplasm. The catalysed reaction is D-glyceraldehyde 3-phosphate + phosphate + NAD(+) = (2R)-3-phospho-glyceroyl phosphate + NADH + H(+). It participates in carbohydrate degradation; glycolysis; pyruvate from D-glyceraldehyde 3-phosphate: step 1/5. The polypeptide is Glyceraldehyde-3-phosphate dehydrogenase (GPDA) (Colletotrichum gloeosporioides (Anthracnose fungus)).